Here is a 339-residue protein sequence, read N- to C-terminus: Protein RecA (339 aa).

74–81 (GPESSGKT) serves as a coordination point for ATP.

The protein belongs to the RecA family.

The protein resides in the cytoplasm. Functionally, can catalyze the hydrolysis of ATP in the presence of single-stranded DNA, the ATP-dependent uptake of single-stranded DNA by duplex DNA, and the ATP-dependent hybridization of homologous single-stranded DNAs. It interacts with LexA causing its activation and leading to its autocatalytic cleavage. The protein is Protein RecA of Phytoplasma mali (strain AT).